The sequence spans 196 residues: Probable molybdenum cofactor guanylyltransferase (196 aa).

GTP is bound by residues 7-9 (LAG), K19, D68, and D93. Residue D93 participates in Mg(2+) binding.

Belongs to the MobA family. Mg(2+) serves as cofactor.

The protein resides in the cytoplasm. It carries out the reaction Mo-molybdopterin + GTP + H(+) = Mo-molybdopterin guanine dinucleotide + diphosphate. Functionally, transfers a GMP moiety from GTP to Mo-molybdopterin (Mo-MPT) cofactor (Moco or molybdenum cofactor) to form Mo-molybdopterin guanine dinucleotide (Mo-MGD) cofactor. The chain is Probable molybdenum cofactor guanylyltransferase from Pyrococcus furiosus (strain ATCC 43587 / DSM 3638 / JCM 8422 / Vc1).